A 71-amino-acid chain; its full sequence is MKADIHPTYEAIEATCSCGNVIKTRSTLCKPIHLDVCSECHPFYTGKQKVLDTGGRIDRFKQRFGVFGATK.

Residues cysteine 16, cysteine 18, cysteine 37, and cysteine 40 each contribute to the Zn(2+) site.

It belongs to the bacterial ribosomal protein bL31 family. Type A subfamily. Part of the 50S ribosomal subunit. It depends on Zn(2+) as a cofactor.

Functionally, binds the 23S rRNA. This is Large ribosomal subunit protein bL31 from Pseudomonas aeruginosa (strain LESB58).